The primary structure comprises 367 residues: Probable trehalose-phosphate phosphatase 4 (367 aa).

It belongs to the trehalose phosphatase family. A divalent metal cation is required as a cofactor.

It carries out the reaction alpha,alpha-trehalose 6-phosphate + H2O = alpha,alpha-trehalose + phosphate. It functions in the pathway glycan biosynthesis; trehalose biosynthesis. Its function is as follows. Removes the phosphate from trehalose 6-phosphate to produce free trehalose. Trehalose accumulation in plant may improve abiotic stress tolerance. The polypeptide is Probable trehalose-phosphate phosphatase 4 (TPP4) (Oryza sativa subsp. japonica (Rice)).